A 197-amino-acid polypeptide reads, in one-letter code: ATP-dependent Clp protease proteolytic subunit (197 aa).

S101 serves as the catalytic Nucleophile. H126 is a catalytic residue.

The protein belongs to the peptidase S14 family. As to quaternary structure, component of the chloroplastic Clp protease core complex.

It localises to the plastid. It is found in the chloroplast stroma. It carries out the reaction Hydrolysis of proteins to small peptides in the presence of ATP and magnesium. alpha-casein is the usual test substrate. In the absence of ATP, only oligopeptides shorter than five residues are hydrolyzed (such as succinyl-Leu-Tyr-|-NHMec, and Leu-Tyr-Leu-|-Tyr-Trp, in which cleavage of the -Tyr-|-Leu- and -Tyr-|-Trp bonds also occurs).. In terms of biological role, cleaves peptides in various proteins in a process that requires ATP hydrolysis. Has a chymotrypsin-like activity. Plays a major role in the degradation of misfolded proteins. The polypeptide is ATP-dependent Clp protease proteolytic subunit (Daucus carota (Wild carrot)).